Here is a 289-residue protein sequence, read N- to C-terminus: Diaminopimelate epimerase (289 aa).

Residues Asn-13, Gln-47, and Asn-67 each coordinate substrate. Cys-76 (proton donor) is an active-site residue. Substrate is bound by residues 77-78 (GN), Asn-167, Asn-200, and 218-219 (ER). The active-site Proton acceptor is the Cys-227. Residue 228 to 229 (GT) participates in substrate binding.

This sequence belongs to the diaminopimelate epimerase family. In terms of assembly, homodimer.

It is found in the cytoplasm. The catalysed reaction is (2S,6S)-2,6-diaminopimelate = meso-2,6-diaminopimelate. It participates in amino-acid biosynthesis; L-lysine biosynthesis via DAP pathway; DL-2,6-diaminopimelate from LL-2,6-diaminopimelate: step 1/1. Catalyzes the stereoinversion of LL-2,6-diaminopimelate (L,L-DAP) to meso-diaminopimelate (meso-DAP), a precursor of L-lysine and an essential component of the bacterial peptidoglycan. The sequence is that of Diaminopimelate epimerase from Burkholderia thailandensis (strain ATCC 700388 / DSM 13276 / CCUG 48851 / CIP 106301 / E264).